A 401-amino-acid polypeptide reads, in one-letter code: uncharacterized protein (401 aa).

The protein belongs to the serpin family.

May act as an inhibitor for a host chymotrypsin-like protease. This is an uncharacterized protein from Acanthamoeba polyphaga mimivirus (APMV).